A 130-amino-acid polypeptide reads, in one-letter code: Small ribosomal subunit protein uS11c (130 aa).

The protein belongs to the universal ribosomal protein uS11 family. Part of the 30S ribosomal subunit.

It is found in the plastid. It localises to the chloroplast. In Bigelowiella natans (Pedinomonas minutissima), this protein is Small ribosomal subunit protein uS11c.